The sequence spans 308 residues: MTLNGGGSGAGGSRGGGQERERRRGSTPWGPAPPLHRRSMPVDERDLQAALTPGALTAAAAGTGTQGPRLDWPEDSEDSLSSGGSDSDESVYKVLLLGAPGVGKSALARIFGGVEDGPEAEAAGHTYDRSIVVDGEEASLMVYDIWEQDGGRWLPGHCMAMGDAYVIVYSVTDKGSFEKASELRVQLRRARQTDDVPIILVGNKSDLVRSREVSVDEGRACAVVFDCKFIETSAALHHNVQALFEGVVRQIRLRRDSKEANARRQAGTRRRESLGKKAKRFLGRIVARNSRKMAFRAKSKSCHDLSVL.

Residues 1-16 are compositionally biased toward gly residues; it reads MTLNGGGSGAGGSRGG. Residues 1–88 are disordered; the sequence is MTLNGGGSGA…SLSSGGSDSD (88 aa). Arginine 24 bears the Omega-N-methylarginine mark. The residue at position 26 (serine 26) is a Phosphoserine. The segment covering 48 to 68 has biased composition (low complexity); it reads QAALTPGALTAAAAGTGTQGP. GTP contacts are provided by residues 98-105 and 203-206; these read GAPGVGKS and NKSD. Positions 278 to 297 are calmodulin-binding; the sequence is AKRFLGRIVARNSRKMAFRA.

The protein belongs to the small GTPase superfamily. RGK family. In terms of assembly, interacts with calmodulin preferentially in the inactive, GDP-bound form. Binds CAMKII which is capable of phosphorylating RAD in vitro. Interacts with CAMK2D. Interacts with CACNB2; interaction may be involved in beta-adrenergic regulation of heart rate and contractile force. Interaction with CACNB2 regulates the trafficking of CACNA1C to the cell membrane. In terms of tissue distribution, most abundantly expressed in the heart. Also found in the skeletal muscle and lung. Lesser amounts in placenta and kidney. Also detected in adipose tissue. Overexpressed in muscle of type II diabetic humans.

The protein resides in the cell membrane. Its function is as follows. May regulate basal voltage-dependent L-type Ca(2+) currents and be required for beta-adrenergic augmentation of Ca(2+) influx in cardiomyocytes, thereby regulating increases in heart rate and contractile force. May play an important role in cardiac antiarrhythmia via the strong suppression of voltage-gated L-type Ca(2+) currents. Regulates voltage-dependent L-type calcium channel subunit alpha-1C trafficking to the cell membrane. Inhibits cardiac hypertrophy through the calmodulin-dependent kinase II (CaMKII) pathway. Inhibits phosphorylation and activation of CAMK2D. This is GTP-binding protein RAD (RRAD) from Homo sapiens (Human).